The following is a 310-amino-acid chain: uncharacterized protein (310 aa).

Positions 5-62 (FTEENLLAFTTAARFGSFSKAAEELGLTTSAISYTIKRMETGLDVVLFTRSTRSIELT) constitute an HTH lysR-type domain. A DNA-binding region (H-T-H motif) is located at residues 22–42 (FSKAAEELGLTTSAISYTIKR).

It belongs to the LysR transcriptional regulatory family.

This is an uncharacterized protein from Escherichia coli (strain K12).